The sequence spans 124 residues: Fluoride-specific ion channel FluC (124 aa).

4 helical membrane-spanning segments follow: residues 4 to 24 (LLLVALGGSIGAVFRYLISIF), 35 to 55 (FGTLLVNVLGSFLMGVIYALG), 60 to 80 (ISPELKALIGIGLLGALTTFS), and 102 to 122 (VVLNLSLCLFMVYLGQQLVFS). 2 residues coordinate Na(+): glycine 74 and threonine 77.

It belongs to the fluoride channel Fluc/FEX (TC 1.A.43) family.

The protein resides in the cell inner membrane. It catalyses the reaction fluoride(in) = fluoride(out). Its activity is regulated as follows. Na(+) is not transported, but it plays an essential structural role and its presence is essential for fluoride channel function. Its function is as follows. Fluoride-specific ion channel. Important for reducing fluoride concentration in the cell, thus reducing its toxicity. The protein is Fluoride-specific ion channel FluC of Shewanella baltica (strain OS185).